Reading from the N-terminus, the 128-residue chain is Large ribosomal subunit protein bL19 (128 aa).

This sequence belongs to the bacterial ribosomal protein bL19 family.

This protein is located at the 30S-50S ribosomal subunit interface and may play a role in the structure and function of the aminoacyl-tRNA binding site. In Azoarcus sp. (strain BH72), this protein is Large ribosomal subunit protein bL19.